Consider the following 1084-residue polypeptide: Putative tRNA-specific 2-thiouridylase (1084 aa).

Transmembrane regions (helical) follow at residues 1–21, 32–52, and 309–329; these read MLIF…FILT, FIIS…FYVI, and IITI…YLIL. The active-site Nucleophile is Cys538. A disulfide bridge connects residues Cys538 and Cys715. Cys715 (cysteine persulfide intermediate) is an active-site residue.

It belongs to the MnmA/TRMU family.

It localises to the plastid. Its subcellular location is the apicoplast. The protein resides in the membrane. The enzyme catalyses S-sulfanyl-L-cysteinyl-[protein] + uridine(34) in tRNA + AH2 + ATP = 2-thiouridine(34) in tRNA + L-cysteinyl-[protein] + A + AMP + diphosphate + H(+). Its function is as follows. Catalyzes the 2-thiolation of uridine at the wobble position (U34) of tRNA, leading to the formation of s(2)U34. Required for apicoplast maintenance. The polypeptide is Putative tRNA-specific 2-thiouridylase (Plasmodium falciparum (isolate 3D7)).